The following is a 393-amino-acid chain: Demethylspheroidene O-methyltransferase (393 aa).

The tract at residues 1 to 36 (MPKDDHTGATADRTAQPTGTGKQPLVPGQPGAAPVQ) is disordered. The segment covering 26-36 (VPGQPGAAPVQ) has biased composition (low complexity). S-adenosyl-L-methionine is bound by residues Asp-259 and Arg-297.

Belongs to the class I-like SAM-binding methyltransferase superfamily. Cation-independent O-methyltransferase family.

It catalyses the reaction demethylspheroidene + S-adenosyl-L-methionine = spheroidene + S-adenosyl-L-homocysteine + H(+). It functions in the pathway carotenoid biosynthesis; spheroidene biosynthesis. In terms of biological role, methyltransferase that mediates the O-methylation of 1-hydroxy carotenoids. Converts hydroxyneurosporene to methoxyneurosporene or demethylspheroidene to spheroidene. Also able to produce spirilloxanthin. In Rhodobacter capsulatus (strain ATCC BAA-309 / NBRC 16581 / SB1003), this protein is Demethylspheroidene O-methyltransferase (crtF).